The sequence spans 275 residues: NH(3)-dependent NAD(+) synthetase (275 aa).

46-53 (GISGGQDS) is an ATP binding site. D52 contributes to the Mg(2+) binding site. R141 is a deamido-NAD(+) binding site. T161 lines the ATP pocket. Residue E166 coordinates Mg(2+). The deamido-NAD(+) site is built by K174 and D181. Residues K190 and T212 each coordinate ATP. 261–262 (HK) is a binding site for deamido-NAD(+).

Belongs to the NAD synthetase family. As to quaternary structure, homodimer.

It catalyses the reaction deamido-NAD(+) + NH4(+) + ATP = AMP + diphosphate + NAD(+) + H(+). It functions in the pathway cofactor biosynthesis; NAD(+) biosynthesis; NAD(+) from deamido-NAD(+) (ammonia route): step 1/1. Catalyzes the ATP-dependent amidation of deamido-NAD to form NAD. Uses ammonia as a nitrogen source. This is NH(3)-dependent NAD(+) synthetase from Limosilactobacillus reuteri (strain DSM 20016) (Lactobacillus reuteri).